Reading from the N-terminus, the 890-residue chain is MESKSGRFPFPFQPYPIQESFMEALYTALDQRKVGIFESPTGTGKSLSLICGALTWLRDYEEQRKQEAARLLEGQKDSDVVKEKNSNSGPPEPDWVSEFVQKKAERDMVNKLKDEELKRKKREERLEMIRHNAQLRYAMKRKADEDDEAVKLLQLSREGAEPETHSPEEEGLIVAEYESDDEATPKSRLCDDDNDDDDDLEEEHVTKIYYCSRTHSQLAQFVHEVQKSPYGDAVRLVNLGSRQNLCINPEVVRLGNVQMMNERCLEMQKNKHEKRQKASDSESKRSRGLAKATCVFSRFENLMAMKDEVLVKVRDVEQLIQHGRETHTCPYYSTRMSIPAAQVVVLPYQSLLHASTRKASGIKLKDQIVIIDEAHNLMDTISAIHSAEISGGQLCRAHSQLSQYCERYRSRLKAKNLMYIKQILFVLEGLVRTLGGKVGQNPNTQSCQTGSELLTINDFLFKAQVDNINLFKVQKYFEKSMISRKLCGFAEKYEGSGINTHSSSKNKENRRTEGLGRFLQTLQSKPTDVSEQQMAVEDKPIMASPMMLAESFLFALTNANKDGRVVIQRQACVAQSSLKFLLLNAAVHFAQILQECRAVIIAGGTMQPVADFKEQLLFSAGVTEERILEFSCGHVIPPENILPIVLCAGPSGQQLEFTFQTRDSPQMMEETGRVLSNLCNIVPGGVVCFFPSYEYEKRILGHWESTGILQRLQSKKKIFQEPKKASQVEQVLSEYSKCIQRCSNIGGGQTGALLFSVVGGKMSEGINFSDDLGRCIVMVGMPYPNIKSPELQEKMAYLDKHMPHVAGKSPGKALVESLCMKAVNQSIGRAIRHRGDYACIVLCDHRYARTGTLQKLPEWIRSSTHTHATFGPAFASARRFFLEKRQKATL.

One can recognise a Helicase ATP-binding domain in the interval 4-424; it reads KSGRFPFPFQ…KNLMYIKQIL (421 aa). An ATP-binding site is contributed by 39-46; sequence SPTGTGKS. Over residues 71–85 the composition is skewed to basic and acidic residues; sequence LLEGQKDSDVVKEKN. Disordered stretches follow at residues 71–95 and 176–199; these read LLEGQKDSDVVKEKNSNSGPPEPDW and EYESDDEATPKSRLCDDDNDDDDD. [4Fe-4S] cluster contacts are provided by Cys-246, Cys-264, Cys-294, and Cys-329. Residues 372 to 375 carry the DEAH box motif; that stretch reads DEAH.

The protein belongs to the DEAD box helicase family. DEAH subfamily. DDX11/CHL1 sub-subfamily. [4Fe-4S] cluster serves as cofactor.

Its subcellular location is the nucleus. The protein resides in the nucleolus. It localises to the cytoplasm. The protein localises to the cytoskeleton. It is found in the spindle pole. Its subcellular location is the midbody. The protein resides in the microtubule organizing center. It localises to the centrosome. The catalysed reaction is Couples ATP hydrolysis with the unwinding of duplex DNA at the replication fork by translocating in the 5'-3' direction. This creates two antiparallel DNA single strands (ssDNA). The leading ssDNA polymer is the template for DNA polymerase III holoenzyme which synthesizes a continuous strand.. It catalyses the reaction ATP + H2O = ADP + phosphate + H(+). Its function is as follows. DNA-dependent ATPase and ATP-dependent DNA helicase that participates in various functions in genomic stability, including DNA replication, DNA repair and heterochromatin organization as well as in ribosomal RNA synthesis. Plays a role in DNA double-strand break (DSB) repair at the DNA replication fork during DNA replication recovery from DNA damage. Plays a role in the regulation of sister chromatid cohesion and mitotic chromosome segregation. Stimulates 5'-single-stranded DNA flap endonuclease activity of FEN1 in an ATP- and helicase-independent manner. Also plays a role in heterochromatin organization. Involved in rRNA transcription activation through binding to active hypomethylated rDNA gene loci by recruiting UBTF and the RNA polymerase Pol I transcriptional machinery. Plays a role in embryonic development. Associates with chromatin at DNA replication fork regions. Binds to single- and double-stranded DNAs. The protein is ATP-dependent DNA helicase DDX11 of Danio rerio (Zebrafish).